A 406-amino-acid polypeptide reads, in one-letter code: D-alanyl-D-alanine carboxypeptidase (406 aa).

An N-terminal signal peptide occupies residues 1–31; sequence MVSGTVGRGTALGAVLLALLAVPAQAGTAAA. Serine 93 serves as the catalytic Acyl-ester intermediate. Substrate-binding positions include 151-154, 190-192, arginine 316, 330-332, and 357-358; these read FAQT, YSN, TGT, and SN. Positions 381–406 are excised as a propeptide; sequence AKLRSATSSATTVERHEDIAPGIARD. The interval 387–406 is disordered; that stretch reads TSSATTVERHEDIAPGIARD. Residues 393–406 show a composition bias toward basic and acidic residues; that stretch reads VERHEDIAPGIARD.

Belongs to the peptidase S12 family.

It is found in the secreted. The enzyme catalyses Preferential cleavage: (Ac)2-L-Lys-D-Ala-|-D-Ala. Also transpeptidation of peptidyl-alanyl moieties that are N-acyl substituents of D-alanine.. The protein operates within cell wall biogenesis; peptidoglycan biosynthesis. In terms of biological role, catalyzes distinct carboxypeptidation and transpeptidation reactions during the last stages of wall peptidoglycan synthesis. Mistaking a beta-lactam antibiotic molecule for a normal substrate (i.e. a D-alanyl-D-alanine-terminated peptide), it becomes immobilized in the form of a long-lived, serine-ester-linked acyl enzyme and thus behave as penicillin-binding protein (PBP). The chain is D-alanyl-D-alanine carboxypeptidase from Streptomyces sp. (strain R61).